The following is a 26-amino-acid chain: Hainantoxin F1-31.97 (26 aa).

Cystine bridges form between cysteine 2/cysteine 16 and cysteine 9/cysteine 21.

This sequence belongs to the neurotoxin 10 (Hwtx-1) family. 17 (Hntx-9) subfamily. In terms of tissue distribution, expressed by the venom gland.

It is found in the secreted. In terms of biological role, ion channel inhibitor. The chain is Hainantoxin F1-31.97 from Cyriopagopus hainanus (Chinese bird spider).